Consider the following 1522-residue polypeptide: Lysine-specific demethylase 5B (1522 aa).

One can recognise a JmjN domain in the interval 10–51; sequence CPVFEPSWEEFADPFAFIHKIRPIAEQTGICKVRPPPDWQPP. The region spanning 75–165 is the ARID domain; that stretch reads TRVKLNFLDQ…ILYPYNLFQS (91 aa). A compositionally biased stretch (basic and acidic residues) spans 180–192; that stretch reads DTKDKEYKPHDIP. Residues 180 to 229 are disordered; sequence DTKDKEYKPHDIPQRQSVQPSESCPPARRAKRLRAEATNIKTESDSPEVR. The PHD-type 1 zinc-finger motif lies at 284-334; sequence LYVCLLCGSGNDEDRLLLCDGCDDSYHTFCLIPPLHDVPKGDWRCPQCLAQ. Residue tyrosine 400 participates in 2-oxoglutarate binding. The region spanning 428-594 is the JmjC domain; it reads EYLDSGWNLN…LGRQCIEHYR (167 aa). Fe cation is bound by residues histidine 474 and glutamate 476. Positions 482, 484, and 492 each coordinate 2-oxoglutarate. Histidine 562 contacts Fe cation. The C5HC2 zinc finger occupies 667 to 719; sequence CYKCKTTCFMSAVYCPCKPGLLVCLYHVEDLCSCPTYQYKLGYRYTLEELYPM. The PHD-type 2 zinc-finger motif lies at 1151–1199; it reads LKVCVCQKEPAAPMIQCELCRGFFHTGCVSVPHALQGPRVWLCPQCRRS. Polar residues predominate over residues 1353 to 1365; it reads LQAEQKPSVGPSN. Disordered regions lie at residues 1353–1373 and 1400–1460; these read LQAE…CCRG and ARVR…DSED. Residues 1400-1416 are compositionally biased toward basic residues; it reads ARVRKMRTPKKKKLKLS. A compositionally biased stretch (basic and acidic residues) spans 1426-1442; that stretch reads RMERERERLLEAQRSSE. Residues 1462–1516 form a PHD-type 3 zinc finger; the sequence is DAICPAVTCLQPEGEEVDWVQCDGSCNQWFHQVCVGISPEMAEKEDYICASCAGK.

It belongs to the JARID1 histone demethylase family. Requires Fe(2+) as cofactor.

Its subcellular location is the nucleus. The enzyme catalyses N(6),N(6),N(6)-trimethyl-L-lysyl(4)-[histone H3] + 3 2-oxoglutarate + 3 O2 = L-lysyl(4)-[histone H3] + 3 formaldehyde + 3 succinate + 3 CO2. Its function is as follows. Histone demethylase that demethylates 'Lys-4' of histone H3, thereby playing a central role in histone code. Does not demethylate histone H3 'Lys-9' or H3 'Lys-27'. Demethylates trimethylated, dimethylated and monomethylated H3 'Lys-4'. Acts as a transcriptional corepressor. May repress the CLOCK-BMAL1 heterodimer-mediated transcriptional activation of the core clock component PER2. The polypeptide is Lysine-specific demethylase 5B (KDM5B) (Gallus gallus (Chicken)).